We begin with the raw amino-acid sequence, 179 residues long: Large ribosomal subunit protein uL5 (179 aa).

The protein belongs to the universal ribosomal protein uL5 family. As to quaternary structure, part of the 50S ribosomal subunit; part of the 5S rRNA/L5/L18/L25 subcomplex. Contacts the 5S rRNA and the P site tRNA. Forms a bridge to the 30S subunit in the 70S ribosome.

Functionally, this is one of the proteins that bind and probably mediate the attachment of the 5S RNA into the large ribosomal subunit, where it forms part of the central protuberance. In the 70S ribosome it contacts protein S13 of the 30S subunit (bridge B1b), connecting the 2 subunits; this bridge is implicated in subunit movement. Contacts the P site tRNA; the 5S rRNA and some of its associated proteins might help stabilize positioning of ribosome-bound tRNAs. The protein is Large ribosomal subunit protein uL5 of Burkholderia mallei (strain ATCC 23344).